Consider the following 251-residue polypeptide: uncharacterized protein (251 aa).

This is an uncharacterized protein from Methanocaldococcus jannaschii (strain ATCC 43067 / DSM 2661 / JAL-1 / JCM 10045 / NBRC 100440) (Methanococcus jannaschii).